The chain runs to 540 residues: MDSQRNILLIALALVSFLLFQQWQVAKNPAPQAVEQAQSSSTLPAPSFADELDPVPGQQQASAKTITVTTDVLTLSIDTVGGDVVHADLNKYSAELDSSDPFVLLKDTKGHQFIAQSGLVGPQGIDLSSTNRPHYKVSADSFTLADGQDELRVPMTFTANGIEYIKTYVFKRGSYALNVEYDVVNNSGNNATFGMYAHLRQNLMDAGGSITMPTYRGGAYSTEDVRYKKYSFEDMQDRNLSINLADGQGWAAMIQHYFAAAWIPRNEPGTNLYTRVIGNLGDIGVRMPNKTIATGDQAKFEATLWVGPKLQNEMAAVAENLDLVVDYGWLWFIAKPLHSLLAFIQSFVGNWGVAIICLTFIVRGAMYPLTKAQYTSMAKMRMLQPKLQAMRERIGDDRQRMSQEMMELYKKEKVNPLGGCLPLILQMPIFIALYWALMESVELRHSPFFGWIHDLSAQDPYYILPLLMGASMFLIQKMSPTTVTDPMQQKIMTFMPVMFTFFFLFFPSGLVLYWLVSNIVTLIQQTLIYKALEKKGLHTK.

A helical transmembrane segment spans residues Asn-6 to Ala-26. Residues Gln-36–Ala-63 are disordered. Transmembrane regions (helical) follow at residues Ala-342–Val-362, Leu-417–Leu-437, Leu-455–Ile-475, and Pro-496–Val-516.

It belongs to the OXA1/ALB3/YidC family. Type 1 subfamily. Interacts with the Sec translocase complex via SecD. Specifically interacts with transmembrane segments of nascent integral membrane proteins during membrane integration.

The protein resides in the cell inner membrane. Its function is as follows. Required for the insertion and/or proper folding and/or complex formation of integral membrane proteins into the membrane. Involved in integration of membrane proteins that insert both dependently and independently of the Sec translocase complex, as well as at least some lipoproteins. Aids folding of multispanning membrane proteins. The polypeptide is Membrane protein insertase YidC (Vibrio campbellii (strain ATCC BAA-1116)).